A 494-amino-acid polypeptide reads, in one-letter code: Tetracenomycin biosynthesis bifunctional cyclase/O-methyl transferase TcmN (494 aa).

The tract at residues 11–140 (VNAPFELVWD…TTTRANMERI (130 aa)) is polyketide cyclase. Ser67 acts as the Proton acceptor; for cyclase activity in catalysis. Active-site proton donor; for cyclase activity residues include Arg69 and Arg82. Residues 169–494 (LLLAASGRLA…TWTTLECRPV (326 aa)) are methyltransferase. Residues Asp358 and 384-386 (GDF) each bind S-adenosyl-L-methionine. The active-site Proton acceptor; for methyltransferase activity is the His405.

The protein in the C-terminal section; belongs to the class I-like SAM-binding methyltransferase superfamily. Cation-independent O-methyltransferase family. The tetracenomycin polyketide synthase (TCM PKS) is composed of a ketosynthase complex (TcmKL), an acyl carrier protein (TcmM), a cyclase (TcmN) and a probable second cyclase (TcmJ). TcmN is a homodimer in solution.

It carries out the reaction 10 malonyl-CoA + 8 H(+) = tetracenomycin F2 + 10 CO2 + 10 CoA + 2 H2O. It participates in antibiotic biosynthesis; tetracenomycin C biosynthesis. Functionally, involved in the biosynthesis of tetracenomycin C (TCM C). Part of a type II polyketide synthase (PKS) that catalyzes the synthesis of tetracenomycin F2 (TCM F2), a precursor of TCM C, from malonyl-CoA. The TcmN N-terminal domain, when coupled with the other components of the PKS, catalyzes the cyclization and aromatization of the linear polyketide intermediate. Catalyzes the cyclization of the first and second rings. In addition, the C-terminal domain acts as a methyltransferase. It catalyzes the specific O-methylation of tetracenomycin D3 (TCM D3) to TCM B3, using S-adenosyl-L-methionine as the methyl donor. The sequence is that of Tetracenomycin biosynthesis bifunctional cyclase/O-methyl transferase TcmN from Streptomyces glaucescens.